The sequence spans 530 residues: Cytochrome P450 monooxygenase apf7 (530 aa).

The helical transmembrane segment at 6 to 26 (VSPVSIWVFVIYAVTIIIAIY) threads the bilayer. Asn-85 carries an N-linked (GlcNAc...) asparagine glycan. Cys-464 is a binding site for heme.

Belongs to the cytochrome P450 family. The cofactor is heme.

Its subcellular location is the membrane. It participates in secondary metabolite biosynthesis. Functionally, cytochrome P450 monooxygenase; part of the gene cluster that mediates the biosynthesis of the cyclic tetrapeptide apicidin F (APF). The non-ribosomal peptide synthetase apf1 incorporates four different amino acids to produce apicidin F: L-phenylalanine, D-pipecolic acid (D-pip), N-methoxy-L-tryptophan and L-2-aminooctanedioic acid. L-Phenylalanine is the only proteinogenic amino acid directly used by apf1. The 3 other apf1 substrates are non-proteinogenic and have to be modified by other enzymes of the cluster. Lysine is converted to delta-1-pyrroline-5-carboxylate (P5C) which is reduced to L-pipecolic acid (L-pip) by apf3. L-pip is epimerized to D-pip, probably by apf1 activity, prior to incorporation. L-Tryptophan is N-oxidyzed by one of the cytochrome P450 monooxygenases (apf7 or apf8), and further methylated at the hydroxy group by the O-methyltransferase apf6 to yield N-methoxy-L-tryptophan. The synthesis of the fourth apf1 substrate is more complex. The fatty acid synthase apf5 is involved in the synthesis of the octanoic acid backbone of L-2-aminooctanedioic acid by fixing one acetyl-CoA unit and three malonyl-CoA units. Then one of the cytochrome P450 monooxygenases (apf7 or apf8) may oxidize this backbone to 2-oxooctanoic acid. The aminotransferase apf4 is predicted to catalyze the exchange of the keto group with an amino group. The next step would be the oxidation of 2-aminooctanoic acid by one of the cytochrome P450 monooxygenases (apf7 or apf8). The last step is the oxidation of 2-amino-8-hydroxyoctanoic acid to 2-aminooctanedioic acid is catalyzed by the FAD-dependent monooxygenase apf9. This is Cytochrome P450 monooxygenase apf7 from Gibberella fujikuroi (strain CBS 195.34 / IMI 58289 / NRRL A-6831) (Bakanae and foot rot disease fungus).